Here is a 438-residue protein sequence, read N- to C-terminus: Coenzyme A disulfide reductase (438 aa).

8–33 serves as a coordination point for FAD; it reads GAVAGGATCASQIRRLDKESDIIIFE. Residues T15, Q19, R22, S39, and N42 each coordinate substrate. The active-site Nucleophile is C43. The active-site Redox-active is C43. Substrate is bound at residue K71. 151 to 166 lines the NADP(+) pocket; it reads VLVVGAGYVSLEVLEN. Residue 267–277 participates in FAD binding; the sequence is TNVPNIYAIGD. H299 is a binding site for substrate. Y419 is an FAD binding site. K427 is a binding site for substrate.

Belongs to the class-III pyridine nucleotide-disulfide oxidoreductase family. In terms of assembly, homodimer. It depends on FAD as a cofactor.

The catalysed reaction is NADP(+) + 2 CoA = CoA-disulfide + NADPH + H(+). Functionally, catalyzes specifically the NADPH-dependent reduction of coenzyme A disulfide. This Staphylococcus aureus (strain USA300) protein is Coenzyme A disulfide reductase.